Consider the following 441-residue polypeptide: Gluconate 2-dehydrogenase cytochrome c subunit (441 aa).

An N-terminal signal peptide occupies residues 1–19 (MMKSILALVLGTLSFAALA). Cytochrome c domains lie at 26–129 (ALVK…MHGV), 173–289 (PVLA…KSLG), and 312–403 (DDSQ…RGSW). Heme c contacts are provided by Cys40, Cys43, His44, Cys188, Cys191, His192, Cys325, Cys328, and His329.

As to quaternary structure, heterotrimer. FAD is required as a cofactor. In terms of processing, binds 3 heme c groupd covalently per subunit.

It localises to the cell membrane. The enzyme catalyses D-gluconate + A = 2-dehydro-D-gluconate + AH2. Functionally, part of the heterotrimer that catalyzes the conversion of D-gluconate to 2-dehydro-D-gluconate. The sequence is that of Gluconate 2-dehydrogenase cytochrome c subunit from Pantoea cypripedii (Pectobacterium cypripedii).